Consider the following 277-residue polypeptide: Formamidopyrimidine-DNA glycosylase (277 aa).

The active-site Schiff-base intermediate with DNA is the P2. The active-site Proton donor is the E3. K59 acts as the Proton donor; for beta-elimination activity in catalysis. Residues H96, R115, and R158 each contribute to the DNA site. The segment at 243–277 (WVYGRGGNPCRRCGGEILREKRAGRSTHFCPRCQK) adopts an FPG-type zinc-finger fold. Catalysis depends on R267, which acts as the Proton donor; for delta-elimination activity.

The protein belongs to the FPG family. Monomer. It depends on Zn(2+) as a cofactor.

It carries out the reaction Hydrolysis of DNA containing ring-opened 7-methylguanine residues, releasing 2,6-diamino-4-hydroxy-5-(N-methyl)formamidopyrimidine.. It catalyses the reaction 2'-deoxyribonucleotide-(2'-deoxyribose 5'-phosphate)-2'-deoxyribonucleotide-DNA = a 3'-end 2'-deoxyribonucleotide-(2,3-dehydro-2,3-deoxyribose 5'-phosphate)-DNA + a 5'-end 5'-phospho-2'-deoxyribonucleoside-DNA + H(+). Functionally, involved in base excision repair of DNA damaged by oxidation or by mutagenic agents. Acts as a DNA glycosylase that recognizes and removes damaged bases. Has a preference for oxidized purines, such as 7,8-dihydro-8-oxoguanine (8-oxoG). Has AP (apurinic/apyrimidinic) lyase activity and introduces nicks in the DNA strand. Cleaves the DNA backbone by beta-delta elimination to generate a single-strand break at the site of the removed base with both 3'- and 5'-phosphates. This Heliobacterium modesticaldum (strain ATCC 51547 / Ice1) protein is Formamidopyrimidine-DNA glycosylase.